A 359-amino-acid polypeptide reads, in one-letter code: MTIKIAIDCMGGDHGVSVTVPAAISFLSRHDDAEMVLVGLPDAIRAQLKKLHALDHPRVSIVEATEVITMDDPVEVALRKKRDSSMRVAVTQVKEGLAGACISAGNTGALMAVSRYVLKTLEGIERPAIATTIPNEQGWGTTVLDLGANADCEPEHLLQFARMAEAMVAVVDHKEHPTVGLLNIGEEVIKGNEVVKRAGELLRASELNFYGNVEGNDIFKGTTDIVVCDGFVGNVALKSTEGLAKMIGSMIKEEFTRSWFTKLLAAVAMPVLSRLARRLDPARYNGASLLGLRGLVIKSHGSADAHSFEWAIKRGYDAAKNGVIARITRAFADKSSAAGGVQSAPETEAPGAHPSPHVA.

Residues 338 to 359 (AGGVQSAPETEAPGAHPSPHVA) form a disordered region.

Belongs to the PlsX family. In terms of assembly, homodimer. Probably interacts with PlsY.

It is found in the cytoplasm. The enzyme catalyses a fatty acyl-[ACP] + phosphate = an acyl phosphate + holo-[ACP]. It functions in the pathway lipid metabolism; phospholipid metabolism. Its function is as follows. Catalyzes the reversible formation of acyl-phosphate (acyl-PO(4)) from acyl-[acyl-carrier-protein] (acyl-ACP). This enzyme utilizes acyl-ACP as fatty acyl donor, but not acyl-CoA. In Cupriavidus taiwanensis (strain DSM 17343 / BCRC 17206 / CCUG 44338 / CIP 107171 / LMG 19424 / R1) (Ralstonia taiwanensis (strain LMG 19424)), this protein is Phosphate acyltransferase.